Consider the following 689-residue polypeptide: Glycine--tRNA ligase beta subunit (689 aa).

Belongs to the class-II aminoacyl-tRNA synthetase family. Tetramer of two alpha and two beta subunits.

It localises to the cytoplasm. It carries out the reaction tRNA(Gly) + glycine + ATP = glycyl-tRNA(Gly) + AMP + diphosphate. In Shewanella sp. (strain W3-18-1), this protein is Glycine--tRNA ligase beta subunit.